A 263-amino-acid chain; its full sequence is Regulatory protein RecX (263 aa).

The protein belongs to the RecX family.

It is found in the cytoplasm. Its function is as follows. Modulates RecA activity. In Bacillus velezensis (strain DSM 23117 / BGSC 10A6 / LMG 26770 / FZB42) (Bacillus amyloliquefaciens subsp. plantarum), this protein is Regulatory protein RecX.